We begin with the raw amino-acid sequence, 185 residues long: Ribosome-recycling factor (185 aa).

This sequence belongs to the RRF family.

The protein localises to the cytoplasm. In terms of biological role, responsible for the release of ribosomes from messenger RNA at the termination of protein biosynthesis. May increase the efficiency of translation by recycling ribosomes from one round of translation to another. The sequence is that of Ribosome-recycling factor from Pectobacterium atrosepticum (strain SCRI 1043 / ATCC BAA-672) (Erwinia carotovora subsp. atroseptica).